Here is an 866-residue protein sequence, read N- to C-terminus: Ribosome biogenesis protein BOP1 homolog (866 aa).

Disordered regions lie at residues 1–180 (MVAN…EETR) and 214–241 (PPEA…EEDI). Acidic residues-rich tracts occupy residues 37–52 (VDDE…DEEN), 60–146 (GNDE…LEEP), and 167–179 (TAED…DEET). 6 WD repeats span residues 527 to 566 (GHTD…CIRT), 568 to 608 (PTGD…SLLV), 697 to 735 (KSKG…LLKK), 738 to 777 (PSCK…RPYQ), 781 to 820 (LHHS…DLLQ), and 836 to 866 (VNDF…RLYT).

This sequence belongs to the WD repeat BOP1/ERB1 family.

It localises to the nucleus. The protein localises to the nucleolus. Its subcellular location is the nucleoplasm. In terms of biological role, required for maturation of ribosomal RNAs and formation of the large ribosomal subunit. The chain is Ribosome biogenesis protein BOP1 homolog from Aedes aegypti (Yellowfever mosquito).